A 617-amino-acid chain; its full sequence is Chaperone protein DnaK (617 aa).

Residue Thr-174 is modified to Phosphothreonine; by autocatalysis. Residues Ala-575–Gln-592 are compositionally biased toward low complexity. The disordered stretch occupies residues Ala-575–Lys-617. Residues Thr-593–Gly-602 are compositionally biased toward polar residues. Residues Val-607–Lys-617 are compositionally biased toward acidic residues.

It belongs to the heat shock protein 70 family.

In terms of biological role, acts as a chaperone. The polypeptide is Chaperone protein DnaK (Halothermothrix orenii (strain H 168 / OCM 544 / DSM 9562)).